The primary structure comprises 431 residues: ATP-dependent RNA helicase DBP8 (431 aa).

Positions 2 to 30 match the Q motif motif; it reads ADFKSLGLSKWLTESLRAMKITQPTAIQK. The 177-residue stretch at 33–209 folds into the Helicase ATP-binding domain; that stretch reads IPKILEGRDC…NAPVQKGKPP (177 aa). 46–53 is a binding site for ATP; that stretch reads AKTGSGKT. Positions 155-158 match the DEAD box motif; the sequence is DEAD. One can recognise a Helicase C-terminal domain in the interval 242 to 389; it reads YLYQLLTCEE…TNKVHDTAVI (148 aa). The tract at residues 404–431 is disordered; that stretch reads LMAMQKENFGERKRQQKKKQNDGKSLRS. The span at 411-431 shows a compositional bias: basic and acidic residues; it reads NFGERKRQQKKKQNDGKSLRS.

It belongs to the DEAD box helicase family. DDX49/DBP8 subfamily. As to quaternary structure, interacts with ESF2.

It localises to the nucleus. The protein resides in the nucleolus. It carries out the reaction ATP + H2O = ADP + phosphate + H(+). In terms of biological role, ATP-binding RNA helicase involved in 40S ribosomal subunit biogenesis and is required for the normal formation of 18S rRNAs through pre-rRNA processing at A0, A1 and A2 sites. Required for vegetative growth. This chain is ATP-dependent RNA helicase DBP8 (DBP8), found in Saccharomyces cerevisiae (strain YJM789) (Baker's yeast).